A 414-amino-acid polypeptide reads, in one-letter code: 2,3-diketo-5-methylthiopentyl-1-phosphate enolase (414 aa).

Residue Lys-99 is the Proton acceptor of the active site. Residues Lys-148, 174 to 177 (KDDE), His-265, Gly-338, and 360 to 361 (GG) each bind substrate. Mg(2+) contacts are provided by Lys-174, Asp-176, and Glu-177. Lys-174 carries the N6-carboxylysine modification.

This sequence belongs to the RuBisCO large chain family. Type IV subfamily. In terms of assembly, homodimer. It depends on Mg(2+) as a cofactor.

The catalysed reaction is 5-methylsulfanyl-2,3-dioxopentyl phosphate = 2-hydroxy-5-methylsulfanyl-3-oxopent-1-enyl phosphate. It functions in the pathway amino-acid biosynthesis; L-methionine biosynthesis via salvage pathway; L-methionine from S-methyl-5-thio-alpha-D-ribose 1-phosphate: step 3/6. Catalyzes the enolization of 2,3-diketo-5-methylthiopentyl-1-phosphate (DK-MTP-1-P) into 2-hydroxy-3-keto-5-methylthiopentenyl-1-phosphate (HK-MTPenyl-1-P). This Bacillus cereus (strain ATCC 10987 / NRS 248) protein is 2,3-diketo-5-methylthiopentyl-1-phosphate enolase.